The primary structure comprises 446 residues: 3-phosphoshikimate 1-carboxyvinyltransferase (446 aa).

Residues 1-20 (MIMAKPLSSRRAAPLAGSAP) form a disordered region. Residues Lys25, Ser26, and Arg30 each coordinate 3-phosphoshikimate. Lys25 contributes to the phosphoenolpyruvate binding site. Residues Gly98 and Arg126 each coordinate phosphoenolpyruvate. 4 residues coordinate 3-phosphoshikimate: Ser171, Gln173, Asp324, and Lys351. Residue Gln173 coordinates phosphoenolpyruvate. Residue Asp324 is the Proton acceptor of the active site. Arg355 and Arg399 together coordinate phosphoenolpyruvate.

The protein belongs to the EPSP synthase family. As to quaternary structure, monomer.

It is found in the cytoplasm. It catalyses the reaction 3-phosphoshikimate + phosphoenolpyruvate = 5-O-(1-carboxyvinyl)-3-phosphoshikimate + phosphate. It participates in metabolic intermediate biosynthesis; chorismate biosynthesis; chorismate from D-erythrose 4-phosphate and phosphoenolpyruvate: step 6/7. Functionally, catalyzes the transfer of the enolpyruvyl moiety of phosphoenolpyruvate (PEP) to the 5-hydroxyl of shikimate-3-phosphate (S3P) to produce enolpyruvyl shikimate-3-phosphate and inorganic phosphate. The polypeptide is 3-phosphoshikimate 1-carboxyvinyltransferase (Paramagnetospirillum magneticum (strain ATCC 700264 / AMB-1) (Magnetospirillum magneticum)).